The primary structure comprises 380 residues: Flap endonuclease 1 (380 aa).

Residues 1 to 104 (MGIKGLSQLI…GELTKRAEKR (104 aa)) form an N-domain region. Asp-34 provides a ligand contact to Mg(2+). The DNA site is built by Arg-47 and Arg-70. Mg(2+) is bound by residues Asp-86, Glu-158, Glu-160, Asp-179, and Asp-181. The segment at 122–253 (DIDKFNRRLV…KKAVELINKH (132 aa)) is I-domain. A DNA-binding site is contributed by Glu-158. The DNA site is built by Gly-231 and Asp-233. Residue Asp-233 participates in Mg(2+) binding. The segment at 336–344 (TQGRLDSFF) is interaction with PCNA. Residues 342-380 (SFFKVLPSTPNPKRKIEDKKTPASKKAKTTGGKPGRKPK) form a disordered region. Over residues 363–380 (PASKKAKTTGGKPGRKPK) the composition is skewed to basic residues.

The protein belongs to the XPG/RAD2 endonuclease family. FEN1 subfamily. As to quaternary structure, interacts with PCNA. Three molecules of FEN1 bind to one PCNA trimer with each molecule binding to one PCNA monomer. PCNA stimulates the nuclease activity without altering cleavage specificity. Mg(2+) serves as cofactor. Phosphorylated. Phosphorylation upon DNA damage induces relocalization to the nuclear plasma.

It is found in the nucleus. It localises to the nucleolus. The protein localises to the nucleoplasm. The protein resides in the mitochondrion. Functionally, structure-specific nuclease with 5'-flap endonuclease and 5'-3' exonuclease activities involved in DNA replication and repair. During DNA replication, cleaves the 5'-overhanging flap structure that is generated by displacement synthesis when DNA polymerase encounters the 5'-end of a downstream Okazaki fragment. It enters the flap from the 5'-end and then tracks to cleave the flap base, leaving a nick for ligation. Also involved in the long patch base excision repair (LP-BER) pathway, by cleaving within the apurinic/apyrimidinic (AP) site-terminated flap. Acts as a genome stabilization factor that prevents flaps from equilibrating into structures that lead to duplications and deletions. Also possesses 5'-3' exonuclease activity on nicked or gapped double-stranded DNA, and exhibits RNase H activity. Also involved in replication and repair of rDNA and in repairing mitochondrial DNA. This chain is Flap endonuclease 1, found in Aedes aegypti (Yellowfever mosquito).